The primary structure comprises 185 residues: MLVLASASPRRREILSRFIRDFHVVPSNAEERCSGTPEECAVELARLKAREVYSRVGGTVIGADTVVSIDGRVLGKPSDEGEAYRMLKLLSGRVHRVTTGYCIIHEGKEIAGSATTEVKFRELDDELIWAYIRTGEPMDKAGAYGIQGKAGLFVEWIRGDYYNVVGFPMEIIWKLRELGFEVLSR.

D64 (proton acceptor) is an active-site residue.

The protein belongs to the Maf family. YhdE subfamily. It depends on a divalent metal cation as a cofactor.

It is found in the cytoplasm. The enzyme catalyses dTTP + H2O = dTMP + diphosphate + H(+). The catalysed reaction is UTP + H2O = UMP + diphosphate + H(+). Nucleoside triphosphate pyrophosphatase that hydrolyzes dTTP and UTP. May have a dual role in cell division arrest and in preventing the incorporation of modified nucleotides into cellular nucleic acids. The sequence is that of dTTP/UTP pyrophosphatase from Thermococcus gammatolerans (strain DSM 15229 / JCM 11827 / EJ3).